A 266-amino-acid polypeptide reads, in one-letter code: Pyridoxal phosphate phosphatase YigL (266 aa).

Asp-8 serves as the catalytic Nucleophile. Asp-8 provides a ligand contact to Mg(2+). Leu-9 contributes to the phosphate binding site. Position 10 (Asp-10) interacts with Mg(2+). Phosphate is bound by residues 42–43 (TG) and Lys-191. Mg(2+) is bound at residue Asp-214. Position 217 (Asn-217) interacts with phosphate.

Belongs to the HAD-like hydrolase superfamily. Cof family. It depends on Mg(2+) as a cofactor. Mn(2+) is required as a cofactor. The cofactor is Co(2+). Requires Zn(2+) as cofactor.

The catalysed reaction is pyridoxal 5'-phosphate + H2O = pyridoxal + phosphate. It carries out the reaction sugar phosphate + H2O = sugar + phosphate.. In terms of biological role, catalyzes Strongly the dephosphorylation of pyridoxal-phosphate (PLP) and moderately the dephosphorylation of 2-deoxyglucose 6-phosphate (2bGLU6P) and beta-glucose 6-phosphate (bGlu6P). Also hydrolyzes both purines (GMP and IMP) and pyrimidines as secondary substrates. This chain is Pyridoxal phosphate phosphatase YigL (yigL), found in Escherichia coli (strain K12).